A 270-amino-acid polypeptide reads, in one-letter code: Glucosamine-6-phosphate deaminase (270 aa).

Residue Asp72 is the Proton acceptor; for enolization step of the active site. Asp141 (for ring-opening step) is an active-site residue. The active-site Proton acceptor; for ring-opening step is the His143. Catalysis depends on Glu148, which acts as the For ring-opening step.

The protein belongs to the glucosamine/galactosamine-6-phosphate isomerase family. NagB subfamily. In terms of assembly, homohexamer.

It catalyses the reaction alpha-D-glucosamine 6-phosphate + H2O = beta-D-fructose 6-phosphate + NH4(+). It functions in the pathway amino-sugar metabolism; N-acetylneuraminate degradation; D-fructose 6-phosphate from N-acetylneuraminate: step 5/5. With respect to regulation, allosterically activated by N-acetylglucosamine 6-phosphate (GlcNAc6P). In terms of biological role, catalyzes the reversible isomerization-deamination of glucosamine 6-phosphate (GlcN6P) to form fructose 6-phosphate (Fru6P) and ammonium ion. This is Glucosamine-6-phosphate deaminase from Haemophilus influenzae (strain PittEE).